We begin with the raw amino-acid sequence, 261 residues long: 5'-nucleotidase SurE (261 aa).

D8, D9, S43, and N96 together coordinate a divalent metal cation.

This sequence belongs to the SurE nucleotidase family. A divalent metal cation is required as a cofactor.

Its subcellular location is the cytoplasm. It catalyses the reaction a ribonucleoside 5'-phosphate + H2O = a ribonucleoside + phosphate. Nucleotidase that shows phosphatase activity on nucleoside 5'-monophosphates. In Cereibacter sphaeroides (strain KD131 / KCTC 12085) (Rhodobacter sphaeroides), this protein is 5'-nucleotidase SurE.